The primary structure comprises 94 residues: Aspartyl/glutamyl-tRNA(Asn/Gln) amidotransferase subunit C (94 aa).

Belongs to the GatC family. Heterotrimer of A, B and C subunits.

The enzyme catalyses L-glutamyl-tRNA(Gln) + L-glutamine + ATP + H2O = L-glutaminyl-tRNA(Gln) + L-glutamate + ADP + phosphate + H(+). The catalysed reaction is L-aspartyl-tRNA(Asn) + L-glutamine + ATP + H2O = L-asparaginyl-tRNA(Asn) + L-glutamate + ADP + phosphate + 2 H(+). Allows the formation of correctly charged Asn-tRNA(Asn) or Gln-tRNA(Gln) through the transamidation of misacylated Asp-tRNA(Asn) or Glu-tRNA(Gln) in organisms which lack either or both of asparaginyl-tRNA or glutaminyl-tRNA synthetases. The reaction takes place in the presence of glutamine and ATP through an activated phospho-Asp-tRNA(Asn) or phospho-Glu-tRNA(Gln). This Solidesulfovibrio magneticus (strain ATCC 700980 / DSM 13731 / RS-1) (Desulfovibrio magneticus) protein is Aspartyl/glutamyl-tRNA(Asn/Gln) amidotransferase subunit C.